The following is a 150-amino-acid chain: Propanediol utilization protein PduV (150 aa).

A targets protein to the BMC region spans residues 1–42; it reads MKRIMLIGPSQCGKTSLTQCMRGEALHYQKTQAIVWSPTTID. GTP is bound at residue 8 to 15; sequence GPSQCGKT.

Belongs to the EutP/PduV family. Interacts with PduU, probably via the PduU beta-barrel which is predicted by modeling to be on the exterior of the BMC.

The protein resides in the bacterial microcompartment. Its pathway is polyol metabolism; 1,2-propanediol degradation. In terms of biological role, may play a role in the spatial distribution of the bacterial microcompartment (BMC) dedicated to 1,2-PD degradation, perhaps being involved in cytoskeleton dynamics; might bind GTP. This subunit is directly targeted to the BMC. Expression of a cosmid containing the full 21-gene pdu operon in E.coli allows E.coli to grow on 1,2-propanediol (1,2-PD) with the appearance of bacterial microcompartments (BMC) in its cytoplasm. Functionally, the 1,2-PD-specific bacterial microcompartment (BMC) concentrates low levels of 1,2-PD catabolic enzymes, concentrates volatile reaction intermediates thus enhancing pathway flux and keeps the level of toxic, mutagenic propionaldehyde low. The polypeptide is Propanediol utilization protein PduV (Citrobacter freundii).